The primary structure comprises 478 residues: Sulfate adenylyltransferase subunit 1 (478 aa).

The 217-residue stretch at Lys24–Asp240 folds into the tr-type G domain. Positions Gly33–Ser40 are G1. Gly33–Ser40 serves as a coordination point for GTP. Residues Gly91–Asp95 are G2. The tract at residues Asp112–Gly115 is G3. Residues Asp112–His116 and Asn167–Asp170 each bind GTP. Residues Asn167–Asp170 form a G4 region. The tract at residues Ser206–Leu208 is G5.

Belongs to the TRAFAC class translation factor GTPase superfamily. Classic translation factor GTPase family. CysN/NodQ subfamily. As to quaternary structure, heterodimer composed of CysD, the smaller subunit, and CysN.

The catalysed reaction is sulfate + ATP + H(+) = adenosine 5'-phosphosulfate + diphosphate. It participates in sulfur metabolism; hydrogen sulfide biosynthesis; sulfite from sulfate: step 1/3. Its function is as follows. With CysD forms the ATP sulfurylase (ATPS) that catalyzes the adenylation of sulfate producing adenosine 5'-phosphosulfate (APS) and diphosphate, the first enzymatic step in sulfur assimilation pathway. APS synthesis involves the formation of a high-energy phosphoric-sulfuric acid anhydride bond driven by GTP hydrolysis by CysN coupled to ATP hydrolysis by CysD. This chain is Sulfate adenylyltransferase subunit 1, found in Aliivibrio fischeri (strain MJ11) (Vibrio fischeri).